The primary structure comprises 437 residues: Adenylosuccinate synthetase (437 aa).

GTP-binding positions include 12 to 18 (GDEGKGK) and 40 to 42 (GHT). Aspartate 13 acts as the Proton acceptor in catalysis. Mg(2+) is bound by residues aspartate 13 and glycine 40. IMP is bound by residues 13-16 (DEGK), 38-41 (NAGH), threonine 128, arginine 142, glutamine 223, threonine 238, and arginine 302. Catalysis depends on histidine 41, which acts as the Proton donor. A substrate-binding site is contributed by 298–304 (TTTGRRR). Residues arginine 304, 330 to 332 (KLD), and 412 to 414 (SLG) contribute to the GTP site.

This sequence belongs to the adenylosuccinate synthetase family. As to quaternary structure, homodimer. Mg(2+) is required as a cofactor.

It is found in the cytoplasm. The enzyme catalyses IMP + L-aspartate + GTP = N(6)-(1,2-dicarboxyethyl)-AMP + GDP + phosphate + 2 H(+). Its pathway is purine metabolism; AMP biosynthesis via de novo pathway; AMP from IMP: step 1/2. Plays an important role in the de novo pathway of purine nucleotide biosynthesis. Catalyzes the first committed step in the biosynthesis of AMP from IMP. In Parasynechococcus marenigrum (strain WH8102), this protein is Adenylosuccinate synthetase.